Here is a 207-residue protein sequence, read N- to C-terminus: Urease accessory protein UreG (207 aa).

12–19 (GPVGAGKT) contributes to the GTP binding site.

It belongs to the SIMIBI class G3E GTPase family. UreG subfamily. As to quaternary structure, homodimer. UreD, UreF and UreG form a complex that acts as a GTP-hydrolysis-dependent molecular chaperone, activating the urease apoprotein by helping to assemble the nickel containing metallocenter of UreC. The UreE protein probably delivers the nickel.

It is found in the cytoplasm. Facilitates the functional incorporation of the urease nickel metallocenter. This process requires GTP hydrolysis, probably effectuated by UreG. The polypeptide is Urease accessory protein UreG (Cereibacter sphaeroides (strain ATCC 17023 / DSM 158 / JCM 6121 / CCUG 31486 / LMG 2827 / NBRC 12203 / NCIMB 8253 / ATH 2.4.1.) (Rhodobacter sphaeroides)).